Consider the following 375-residue polypeptide: Alcohol dehydrogenase 4, mitochondrial (375 aa).

The transit peptide at 1–27 directs the protein to the mitochondrion; it reads MFRLARAQTALANKASVSRSFLRLNSS. Positions 71, 94, 125, 128, 131, 139, and 181 each coordinate Zn(2+). NAD(+)-binding positions include 205-211, Asp229, Lys234, 296-298, and Arg368; these read GAAGGLG and VGL.

This sequence belongs to the zinc-containing alcohol dehydrogenase family. In terms of assembly, homotetramer. Zn(2+) serves as cofactor.

Its subcellular location is the mitochondrion matrix. The catalysed reaction is a primary alcohol + NAD(+) = an aldehyde + NADH + H(+). The enzyme catalyses a secondary alcohol + NAD(+) = a ketone + NADH + H(+). The chain is Alcohol dehydrogenase 4, mitochondrial (ADH4) from Kluyveromyces lactis (strain ATCC 8585 / CBS 2359 / DSM 70799 / NBRC 1267 / NRRL Y-1140 / WM37) (Yeast).